The chain runs to 522 residues: Putative malate dehydrogenase 1B (522 aa).

Residues 495–522 (EETEKSSSEDTPEAAAAAVSTGDETVPS) form a disordered region.

This sequence belongs to the LDH/MDH superfamily. MDH type 2 family.

This Branchiostoma floridae (Florida lancelet) protein is Putative malate dehydrogenase 1B (MDH1B).